A 309-amino-acid polypeptide reads, in one-letter code: UDP-3-O-acyl-N-acetylglucosamine deacetylase (309 aa).

3 residues coordinate Zn(2+): His78, His237, and Asp241. The active-site Proton donor is the His264.

This sequence belongs to the LpxC family. It depends on Zn(2+) as a cofactor.

The catalysed reaction is a UDP-3-O-[(3R)-3-hydroxyacyl]-N-acetyl-alpha-D-glucosamine + H2O = a UDP-3-O-[(3R)-3-hydroxyacyl]-alpha-D-glucosamine + acetate. Its pathway is glycolipid biosynthesis; lipid IV(A) biosynthesis; lipid IV(A) from (3R)-3-hydroxytetradecanoyl-[acyl-carrier-protein] and UDP-N-acetyl-alpha-D-glucosamine: step 2/6. Catalyzes the hydrolysis of UDP-3-O-myristoyl-N-acetylglucosamine to form UDP-3-O-myristoylglucosamine and acetate, the committed step in lipid A biosynthesis. The sequence is that of UDP-3-O-acyl-N-acetylglucosamine deacetylase from Methylobacillus flagellatus (strain ATCC 51484 / DSM 6875 / VKM B-1610 / KT).